Reading from the N-terminus, the 305-residue chain is Probable xyloglucan endotransglucosylase/hydrolase protein 8 (305 aa).

The signal sequence occupies residues 1–31 (METERRIITSCSAMTALFLFMTALMASSSIA). Positions 32 to 231 (ATPTQSFEDN…WKKAPFVSSY (200 aa)) constitute a GH16 domain. N61 and N66 each carry an N-linked (GlcNAc...) asparagine glycan. The active-site Nucleophile is the E115. The active-site Proton donor is E119. Xyloglucan is bound at residue E119. N-linked (GlcNAc...) asparagine glycosylation occurs at N123. Position 132–134 (132–134 (QTN)) interacts with xyloglucan. N-linked (GlcNAc...) asparagine glycosylation occurs at N138. Residues 142 to 144 (NRE), 210 to 211 (DW), and G215 each bind xyloglucan. 2 disulfide bridges follow: C239–C248 and C286–C299. Xyloglucan is bound at residue R291.

This sequence belongs to the glycosyl hydrolase 16 family. XTH group 1 subfamily. Contains at least one intrachain disulfide bond essential for its enzymatic activity.

It localises to the secreted. The protein resides in the cell wall. Its subcellular location is the extracellular space. It is found in the apoplast. It carries out the reaction breaks a beta-(1-&gt;4) bond in the backbone of a xyloglucan and transfers the xyloglucanyl segment on to O-4 of the non-reducing terminal glucose residue of an acceptor, which can be a xyloglucan or an oligosaccharide of xyloglucan.. Catalyzes xyloglucan endohydrolysis (XEH) and/or endotransglycosylation (XET). Cleaves and religates xyloglucan polymers, an essential constituent of the primary cell wall, and thereby participates in cell wall construction of growing tissues. This is Probable xyloglucan endotransglucosylase/hydrolase protein 8 (XTH8) from Arabidopsis thaliana (Mouse-ear cress).